The sequence spans 274 residues: Diaminopimelate epimerase (274 aa).

The substrate site is built by Asn-11, Gln-44, and Asn-64. The active-site Proton donor is the Cys-73. Substrate contacts are provided by residues 74–75, Asn-157, Asn-190, and 208–209; these read GN and ER. Residue Cys-217 is the Proton acceptor of the active site. 218–219 contributes to the substrate binding site; that stretch reads GS.

Belongs to the diaminopimelate epimerase family. As to quaternary structure, homodimer.

Its subcellular location is the cytoplasm. The catalysed reaction is (2S,6S)-2,6-diaminopimelate = meso-2,6-diaminopimelate. It participates in amino-acid biosynthesis; L-lysine biosynthesis via DAP pathway; DL-2,6-diaminopimelate from LL-2,6-diaminopimelate: step 1/1. Functionally, catalyzes the stereoinversion of LL-2,6-diaminopimelate (L,L-DAP) to meso-diaminopimelate (meso-DAP), a precursor of L-lysine and an essential component of the bacterial peptidoglycan. The chain is Diaminopimelate epimerase from Actinobacillus pleuropneumoniae serotype 7 (strain AP76).